Consider the following 299-residue polypeptide: Bifunctional protein FolD (299 aa).

NADP(+)-binding positions include 168–170, Ser-193, and Ile-234; that span reads GRS.

The protein belongs to the tetrahydrofolate dehydrogenase/cyclohydrolase family. Homodimer.

The enzyme catalyses (6R)-5,10-methylene-5,6,7,8-tetrahydrofolate + NADP(+) = (6R)-5,10-methenyltetrahydrofolate + NADPH. It carries out the reaction (6R)-5,10-methenyltetrahydrofolate + H2O = (6R)-10-formyltetrahydrofolate + H(+). The protein operates within one-carbon metabolism; tetrahydrofolate interconversion. Functionally, catalyzes the oxidation of 5,10-methylenetetrahydrofolate to 5,10-methenyltetrahydrofolate and then the hydrolysis of 5,10-methenyltetrahydrofolate to 10-formyltetrahydrofolate. In Bartonella quintana (strain Toulouse) (Rochalimaea quintana), this protein is Bifunctional protein FolD.